A 197-amino-acid polypeptide reads, in one-letter code: HTH-type transcriptional regulator BetI (197 aa).

Residues 8 to 68 (PIRRQQLIEA…ATMGYIMSML (61 aa)) enclose the HTH tetR-type domain. A DNA-binding region (H-T-H motif) is located at residues 31–50 (SIALIARLAGVSNGIISHYF).

The protein operates within amine and polyamine biosynthesis; betaine biosynthesis via choline pathway [regulation]. In terms of biological role, repressor involved in the biosynthesis of the osmoprotectant glycine betaine. It represses transcription of the choline transporter BetT and the genes of BetAB involved in the synthesis of glycine betaine. The sequence is that of HTH-type transcriptional regulator BetI from Pseudomonas fluorescens (strain ATCC BAA-477 / NRRL B-23932 / Pf-5).